Here is a 485-residue protein sequence, read N- to C-terminus: Probable alginate O-acetylase AlgI (485 aa).

The next 9 membrane-spanning stretches (helical) occupy residues 7–24, 39–61, 78–100, 115–137, 150–172, 312–334, 360–382, 402–424, and 461–483; these read VFLF…YLSG, FYAW…NYWI, WLLL…NFGV, FILT…ISYI, NLID…VLRF, FLTM…WGAW, AFTF…HVAA, AQLT…FFGL, and ILLL…FLYF. Residue H322 is part of the active site.

Belongs to the membrane-bound acyltransferase family.

The protein localises to the cell inner membrane. Its pathway is glycan biosynthesis; alginate biosynthesis. In terms of biological role, together with AlgJ and AlgF, forms an inner membrane complex which probably interacts with the alginate polymerization-transport complex and adds acetyl groups at the O-2 and O-3 positions of mannuronate residues. Acetylation of alginate is important for the architecture of biofilms and increases the ability of alginate to act as a defense barrier. This Pseudomonas putida (strain ATCC 47054 / DSM 6125 / CFBP 8728 / NCIMB 11950 / KT2440) protein is Probable alginate O-acetylase AlgI (algI).